A 281-amino-acid polypeptide reads, in one-letter code: Probable replication-associated protein repA1 (281 aa).

The protein belongs to the IncFII RepA family.

This protein is essential for plasmid replication; it is involved in copy control functions. The sequence is that of Probable replication-associated protein repA1 (repA1) from Buchnera aphidicola subsp. Cinara cedri (strain Cc).